Reading from the N-terminus, the 571-residue chain is E3 ubiquitin-protein ligase ipaH3 (571 aa).

The interval 1-260 (MSIMLPINNN…SQQTAQPDYH (260 aa)) is interaction with target proteins. LRR repeat units follow at residues 58–81 (INQF…LPPQ), 83–99 (TVLE…PELP), 100–119 (ASLE…PELP), 120–144 (ASLK…LLEY), 146–159 (NADN…PELP), 160–184 (TSLE…SLEA), 186–202 (DVST…PVRN), 205–229 (SEET…ILSL), and 232–260 (TCTI…PDYH). The tract at residues 269–278 (SDGQQNTLHR) is linker. An NEL domain is found at 279 to 571 (PLADAVTAWF…SENGSQLHHS (293 aa)). Residues 279–571 (PLADAVTAWF…SENGSQLHHS (293 aa)) form an E3 ubiquitin-protein ligase catalytic domain region. Cys-363 acts as the Glycyl thioester intermediate in catalysis.

Belongs to the LRR-containing bacterial E3 ligase family. Ubiquitinated in the presence of host E1 ubiquitin-activating enzyme, E2 ubiquitin-conjugating enzyme UBE2D3 and ubiquitin.

It is found in the secreted. The protein localises to the host cytoplasm. It carries out the reaction S-ubiquitinyl-[E2 ubiquitin-conjugating enzyme]-L-cysteine + [acceptor protein]-L-lysine = [E2 ubiquitin-conjugating enzyme]-L-cysteine + N(6)-ubiquitinyl-[acceptor protein]-L-lysine.. In terms of biological role, effector proteins function to alter host cell physiology and promote bacterial survival in host tissues. This protein is an E3 ubiquitin ligase that interferes with host's ubiquitination pathway. Synthesizes a 'Lys-48'-linked ubiquitin chain, which requires non-covalent binding between ubiquitin and the host ubiquitin-conjugating enzyme UBE2D1. This chain is E3 ubiquitin-protein ligase ipaH3 (ipaH3), found in Shigella flexneri.